We begin with the raw amino-acid sequence, 169 residues long: Crossover junction endodeoxyribonuclease RuvC (169 aa).

Residues Asp-7, Glu-67, and Asp-139 contribute to the active site. Mg(2+) contacts are provided by Asp-7, Glu-67, and Asp-139.

The protein belongs to the RuvC family. In terms of assembly, homodimer which binds Holliday junction (HJ) DNA. The HJ becomes 2-fold symmetrical on binding to RuvC with unstacked arms; it has a different conformation from HJ DNA in complex with RuvA. In the full resolvosome a probable DNA-RuvA(4)-RuvB(12)-RuvC(2) complex forms which resolves the HJ. Mg(2+) is required as a cofactor.

It is found in the cytoplasm. The enzyme catalyses Endonucleolytic cleavage at a junction such as a reciprocal single-stranded crossover between two homologous DNA duplexes (Holliday junction).. Functionally, the RuvA-RuvB-RuvC complex processes Holliday junction (HJ) DNA during genetic recombination and DNA repair. Endonuclease that resolves HJ intermediates. Cleaves cruciform DNA by making single-stranded nicks across the HJ at symmetrical positions within the homologous arms, yielding a 5'-phosphate and a 3'-hydroxyl group; requires a central core of homology in the junction. The consensus cleavage sequence is 5'-(A/T)TT(C/G)-3'. Cleavage occurs on the 3'-side of the TT dinucleotide at the point of strand exchange. HJ branch migration catalyzed by RuvA-RuvB allows RuvC to scan DNA until it finds its consensus sequence, where it cleaves and resolves the cruciform DNA. The polypeptide is Crossover junction endodeoxyribonuclease RuvC (Rhodospirillum rubrum (strain ATCC 11170 / ATH 1.1.1 / DSM 467 / LMG 4362 / NCIMB 8255 / S1)).